A 79-amino-acid polypeptide reads, in one-letter code: Exodeoxyribonuclease 7 small subunit (79 aa).

This sequence belongs to the XseB family. As to quaternary structure, heterooligomer composed of large and small subunits.

The protein resides in the cytoplasm. It carries out the reaction Exonucleolytic cleavage in either 5'- to 3'- or 3'- to 5'-direction to yield nucleoside 5'-phosphates.. In terms of biological role, bidirectionally degrades single-stranded DNA into large acid-insoluble oligonucleotides, which are then degraded further into small acid-soluble oligonucleotides. The chain is Exodeoxyribonuclease 7 small subunit from Lactococcus lactis subsp. cremoris (strain MG1363).